The primary structure comprises 540 residues: Malolactic enzyme (540 aa).

The Proton donor role is filled by Tyr-90. The active-site Proton acceptor is Lys-163. Lys-163 serves as a coordination point for substrate. Residues Glu-234, Asp-235, and Asp-258 each coordinate Mn(2+). NAD(+)-binding positions include 291–294 (GGSA), Asn-403, and Asn-448. Asn-448 lines the substrate pocket.

The protein belongs to the malic enzymes family. As to quaternary structure, homodimer. Mn(2+) serves as cofactor. The cofactor is NAD(+).

The enzyme catalyses (S)-malate + H(+) = (S)-lactate + CO2. Involved in the malolactic fermentation (MLF) of wine, which results in a natural decrease in acidity and favorable changes in wine flavors. Catalyzes the decarboxylation of L-malate to L-lactate. The sequence is that of Malolactic enzyme from Lactococcus lactis subsp. lactis (strain IL1403) (Streptococcus lactis).